Here is a 217-residue protein sequence, read N- to C-terminus: uncharacterized protein (217 aa).

6 helical membrane-spanning segments follow: residues 13–35 (IWLTSTLLAMKYLTPLNLAIALL), 50–68 (FSLVFPILLSALAAYILYL), 75–94 (FLLAYSILFIALKFVNEWRI), 109–131 (MMALAYGAGLMEILAPLTLLFSL), 152–174 (YLAIIPLALIFYILSHPVLAAAV), and 194–216 (GFSLLFLNLLFVVGFLALDFAGL).

It is found in the cell membrane. This is an uncharacterized protein from Archaeoglobus fulgidus (strain ATCC 49558 / DSM 4304 / JCM 9628 / NBRC 100126 / VC-16).